The sequence spans 275 residues: Large ribosomal subunit protein uL2 (275 aa).

Disordered stretches follow at residues 36-55 and 223-275; these read KQSKNAGRNNSGRITVRHQG and VAMN…RHKR. The segment covering 39-48 has biased composition (polar residues); sequence KNAGRNNSGR. Positions 229–239 are enriched in basic and acidic residues; the sequence is DHPHGGGEGRT.

It belongs to the universal ribosomal protein uL2 family. In terms of assembly, part of the 50S ribosomal subunit. Forms a bridge to the 30S subunit in the 70S ribosome.

In terms of biological role, one of the primary rRNA binding proteins. Required for association of the 30S and 50S subunits to form the 70S ribosome, for tRNA binding and peptide bond formation. It has been suggested to have peptidyltransferase activity; this is somewhat controversial. Makes several contacts with the 16S rRNA in the 70S ribosome. The protein is Large ribosomal subunit protein uL2 of Aromatoleum aromaticum (strain DSM 19018 / LMG 30748 / EbN1) (Azoarcus sp. (strain EbN1)).